The sequence spans 1498 residues: Golgin subfamily A member 3 (1498 aa).

Met1 bears the N-acetylmethionine mark. The disordered stretch occupies residues 1–118 (MDGASAEQDG…GTSAEGSVRK (118 aa)). A Phosphoserine modification is found at Ser18. Positions 27–36 (PLKPPGPLVP) are enriched in pro residues. The residue at position 57 (Ser57) is a Phosphoserine. Residues 71-81 (PTPPFPDPPSS) are compositionally biased toward pro residues. Residues 121–141 (LQSLRLSLPMQETQLCSTDSP) are interaction with GOPC. Disordered regions lie at residues 166 to 195 (RVKR…MLNP) and 216 to 325 (SVPR…SAST). Residues 172–257 (ERSSQPATKT…DYRTEDSNAG (86 aa)) are golgi-targeting domain. Composition is skewed to polar residues over residues 173 to 184 (RSSQPATKTRLF) and 269 to 291 (TKGS…SLSP). Residue Ser272 is modified to Phosphoserine. Residues 315-324 (SDSSSYSSAS) are compositionally biased toward low complexity. A phosphoserine mark is found at Ser385, Ser389, and Ser465. The stretch at 394 to 1459 (VSLESSAAET…ALTVHESLSS (1066 aa)) forms a coiled coil. Positions 789 to 801 (KEELDRGARRLEE) are enriched in basic and acidic residues. 4 disordered regions span residues 789–809 (KEEL…TSET), 974–993 (QKQK…KEMK), 1376–1400 (RGAA…PIKI), and 1440–1498 (DSLQ…GPGE). The residue at position 983 (Ser983) is a Phosphoserine. The segment covering 1376–1387 (RGAAKTRKEPKG) has biased composition (basic and acidic residues). Position 1392 is a phosphoserine (Ser1392). Residues 1440–1452 (DSLQRQMEEHALT) are compositionally biased toward basic and acidic residues.

Homodimer. Interacts with GOLGA7. Isoform 1 interacts with GOPC while isoform 3 does not. Cleaved by caspases in apoptotic cells. Expressed in all tissues tested. Expressed in liver, testis, lung, heart, salivary gland and kidney.

It is found in the cytoplasm. It localises to the golgi apparatus. The protein localises to the golgi stack membrane. In terms of biological role, golgi auto-antigen; probably involved in maintaining Golgi structure. This Homo sapiens (Human) protein is Golgin subfamily A member 3 (GOLGA3).